Reading from the N-terminus, the 219-residue chain is MAEISAKMVQELREKTGAGMMDCKKALTEAGGDLAKAEEVLRKKGLSAAAKKTGRAATEGAVASYIHMGGKIGVLVEVNCETDFVARTEGFQGLVKEIAMQVAAASPRWVRREEVPADVVAKELEIAKAQAREQKKPEAILEKIATGKVEKFYSEFCLMEQAWVKDDKKKIQDVLTDAVAKIGENIQIRRFARFVLGEGLEKKQENLAEEVAKAAGLQK.

Residues 82 to 85 are involved in Mg(2+) ion dislocation from EF-Tu; sequence TDFV.

This sequence belongs to the EF-Ts family.

It localises to the cytoplasm. In terms of biological role, associates with the EF-Tu.GDP complex and induces the exchange of GDP to GTP. It remains bound to the aminoacyl-tRNA.EF-Tu.GTP complex up to the GTP hydrolysis stage on the ribosome. This is Elongation factor Ts from Anaeromyxobacter dehalogenans (strain 2CP-1 / ATCC BAA-258).